Reading from the N-terminus, the 218-residue chain is Transmembrane gamma-carboxyglutamic acid protein 1 (218 aa).

A propeptide spanning residues 1 to 20 is cleaved from the precursor; sequence MGRIFLTGEKANSVLKRYPR. Residues 20–66 enclose the Gla domain; it reads RANGLFEEIRQGNIERECKEEVCTFEEAREAFENNEKTKEFWNTYTK. At 21-80 the chain is on the extracellular side; sequence ANGLFEEIRQGNIERECKEEVCTFEEAREAFENNEKTKEFWNTYTKAQQGESNRGSDWFQ. Residues C37 and C42 are joined by a disulfide bond. Residues 81–101 traverse the membrane as a helical segment; sequence FYLTFPLIFGLFIILLVIFLI. Over 102–218 the chain is Cytoplasmic; it reads WRCFLRNKTR…AMVPVATTIK (117 aa). Residues 160-192 form a disordered region; that stretch reads STRLSNCDPPPTYEEATGQMNLRRSETEPHLDP. Residues 182-192 are compositionally biased toward basic and acidic residues; the sequence is RRSETEPHLDP.

Post-translationally, gla residues are produced after subsequent post-translational modifications of glutamate by a vitamin K-dependent gamma-carboxylase.

It localises to the membrane. The chain is Transmembrane gamma-carboxyglutamic acid protein 1 (PRRG1) from Bos taurus (Bovine).